The sequence spans 582 residues: Peptidyl-prolyl cis-trans isomerase FKBP10 (582 aa).

An N-terminal signal peptide occupies residues 1-26 (MFPAGPPSHSLLRLPLLQLLLLVVQA). 3 consecutive PPIase FKBP-type domains span residues 62-150 (GDFV…LDVW), 174-262 (GDFV…IDVH), and 286-374 (GDFM…IDFH). Residues Asn70, Asn182, Asn294, Asn310, Asn352, Asn393, and Asn407 are each glycosylated (N-linked (GlcNAc...) asparagine). The region spanning 399-486 (GDFVRYHYNC…LFEVELVSRE (88 aa)) is the PPIase FKBP-type 4 domain. EF-hand domains lie at 497–532 (WHKDPPANLFEDMDLNKDGEVPPEEFSTFIKAQVSE) and 542–577 (DPEKTIGDMFQNQDRNQDGKITVDELKLKSDEDEER). Ca(2+)-binding residues include Asp510, Asn512, Asp514, Glu516, Glu521, Asp555, Asn557, Asp559, Lys561, and Glu566. The interval 533–582 (GKGRLMPGQDPEKTIGDMFQNQDRNQDGKITVDELKLKSDEDEERVHEEL) is disordered. Residues 556–582 (RNQDGKITVDELKLKSDEDEERVHEEL) are compositionally biased toward basic and acidic residues. The Prevents secretion from ER motif lies at 579–582 (HEEL).

In terms of processing, glycosylated and phosphorylated.

Its subcellular location is the endoplasmic reticulum lumen. The catalysed reaction is [protein]-peptidylproline (omega=180) = [protein]-peptidylproline (omega=0). Inhibited by both FK506 and rapamycin, but not by cyclosporin A. Its function is as follows. PPIases accelerate the folding of proteins during protein synthesis. This Homo sapiens (Human) protein is Peptidyl-prolyl cis-trans isomerase FKBP10 (FKBP10).